An 83-amino-acid chain; its full sequence is Small ribosomal subunit protein bS16 (83 aa).

The protein belongs to the bacterial ribosomal protein bS16 family.

The polypeptide is Small ribosomal subunit protein bS16 (Shewanella frigidimarina (strain NCIMB 400)).